A 258-amino-acid polypeptide reads, in one-letter code: 5'-nucleotidase SurE (258 aa).

Residues Asp-16, Asp-17, Ser-47, and Asn-99 each coordinate a divalent metal cation.

The protein belongs to the SurE nucleotidase family. A divalent metal cation is required as a cofactor.

The protein resides in the cytoplasm. The catalysed reaction is a ribonucleoside 5'-phosphate + H2O = a ribonucleoside + phosphate. Its function is as follows. Nucleotidase that shows phosphatase activity on nucleoside 5'-monophosphates. The sequence is that of 5'-nucleotidase SurE from Coxiella burnetii (strain Dugway 5J108-111).